The primary structure comprises 78 residues: MVTVESTILQVKNRRHTAVIYVNESKIEVVDCTNSTNCRIQGVKGAGCPSYCPFVVDAKRYVQGLKTKYRVEVLNPNP.

This is an uncharacterized protein from Archaeoglobus fulgidus (strain ATCC 49558 / DSM 4304 / JCM 9628 / NBRC 100126 / VC-16).